The primary structure comprises 49 residues: Large ribosomal subunit protein bL33 (49 aa).

This sequence belongs to the bacterial ribosomal protein bL33 family.

The sequence is that of Large ribosomal subunit protein bL33 from Streptococcus suis (strain 98HAH33).